The sequence spans 152 residues: Transcriptional regulator MraZ (152 aa).

SpoVT-AbrB domains are found at residues 5-52 and 81-124; these read ATLV…PLPE and ASEC…DETT.

This sequence belongs to the MraZ family. Forms oligomers.

It is found in the cytoplasm. The protein localises to the nucleoid. Its function is as follows. Negatively regulates its own expression and that of the subsequent genes in the proximal part of the division and cell wall (dcw) gene cluster. Acts by binding directly to DNA. May also regulate the expression of genes outside the dcw cluster. This is Transcriptional regulator MraZ from Escherichia coli O127:H6 (strain E2348/69 / EPEC).